A 137-amino-acid polypeptide reads, in one-letter code: Protein yippee-like F37A8.5 (137 aa).

The interval 1–20 (MHFRMKVLENSSKHNTPKKQ) is disordered. The 98-residue stretch at 32-129 (RCYSCIHCRA…IELAHMVKDN (98 aa)) folds into the Yippee domain. The Zn(2+) site is built by Cys-36, Cys-39, Cys-92, and Cys-95.

Belongs to the yippee family.

In Caenorhabditis elegans, this protein is Protein yippee-like F37A8.5.